The following is a 277-amino-acid chain: Large ribosomal subunit protein uL2 (277 aa).

Disordered regions lie at residues 36 to 58 and 219 to 277; these read PLHKKGGRNNQGKLTVRHQGGGH and TVRG…RKNK. Positions 258 to 277 are enriched in basic residues; that stretch reads KTRKKKNKSDKFIVRRRKNK.

Belongs to the universal ribosomal protein uL2 family. As to quaternary structure, part of the 50S ribosomal subunit. Forms a bridge to the 30S subunit in the 70S ribosome.

Functionally, one of the primary rRNA binding proteins. Required for association of the 30S and 50S subunits to form the 70S ribosome, for tRNA binding and peptide bond formation. It has been suggested to have peptidyltransferase activity; this is somewhat controversial. Makes several contacts with the 16S rRNA in the 70S ribosome. This is Large ribosomal subunit protein uL2 from Bacillus velezensis (strain DSM 23117 / BGSC 10A6 / LMG 26770 / FZB42) (Bacillus amyloliquefaciens subsp. plantarum).